The following is an 803-amino-acid chain: Volume-regulated anion channel subunit LRRC8C (803 aa).

The Cytoplasmic segment spans residues 1-22; it reads MIPVTEFRQFSEQQPAFRVLKP. Residues 23 to 47 traverse the membrane as a helical segment; sequence WWDVFTDYLSVAMLMIGVFGCTLQV. The Extracellular segment spans residues 48 to 124; sequence MQDKIICLPK…CYERALHWYA (77 aa). 2 disulfide bridges follow: Cys54/Cys308 and Cys115/Cys293. 2 N-linked (GlcNAc...) asparagine glycosylation sites follow: Asn64 and Asn70. A helical transmembrane segment spans residues 125–144; sequence KYFPYLVLIHTLVFMLCSNF. Topologically, residues 145–262 are cytoplasmic; sequence WFKFPGSSSK…EEGDILYAMY (118 aa). Residues 177 to 209 are disordered; that stretch reads EVSGEDSEEKDNRKNNMNRSNTIQSGPEDSLVN. Residues 191-209 show a composition bias toward polar residues; sequence NNMNRSNTIQSGPEDSLVN. Residues Ser212 and Ser215 each carry the phosphoserine modification. A helical transmembrane segment spans residues 263 to 284; that stretch reads VRQTVLKVIKFLIIIAYNSALV. Residues 285 to 314 lie on the Extracellular side of the membrane; that stretch reads SKVQFTVDCNVDIQDMTGYKNFSCNHTMAH. Residues 315–339 form a helical membrane-spanning segment; it reads LFSKLSFCYLCFVSIYGLTCLYTLY. The Cytoplasmic portion of the chain corresponds to 340 to 803; that stretch reads WLFYRSLREY…SDVREQMKTE (464 aa). 17 LRR repeats span residues 397 to 420, 421 to 443, 446 to 466, 467 to 488, 490 to 513, 515 to 537, 541 to 563, 565 to 587, 588 to 611, 613 to 635, 636 to 659, 660 to 682, 684 to 705, 706 to 728, 730 to 751, 753 to 774, and 776 to 799; these read ENKL…KLQT, NAHN…VFEI, LQSL…IAQL, DNLQ…ALSF, KENL…MYGL, NLEE…TLES, LKSL…VVDV, SHLQ…NLKK, MTNL…VFSL, SLQE…SFQH, LRKL…IKKL, TSLE…LFLC, KIRY…IGVL, QSLQ…LYFC, KLKT…IGNL, FLSY…LGDC, and ALKR…VREQ.

Belongs to the LRRC8 family. In terms of assembly, heterohexamer; oligomerizes with other LRRC8 proteins (LRRC8A, LRRC8B, LRRC8D and/or LRRC8E) to form a heterohexamer. Homoheptamer; inactive, likely because it is not targeted to the plasma membrane in the absence of LRRC8A. In vivo, the subunit composition may depend primarily on expression levels, and heterooligomeric channels containing various proportions of the different LRRC8 proteins may coexist. Expressed at highest levels in skeletal muscle, and at moderate levels in heart, lung and peripheral blood leukocytes.

It is found in the cell membrane. It localises to the endoplasmic reticulum membrane. It carries out the reaction chloride(in) = chloride(out). The catalysed reaction is iodide(out) = iodide(in). It catalyses the reaction taurine(out) = taurine(in). The enzyme catalyses 2',3'-cGAMP(out) = 2',3'-cGAMP(in). In terms of biological role, non-essential component of the volume-regulated anion channel (VRAC, also named VSOAC channel), an anion channel required to maintain a constant cell volume in response to extracellular or intracellular osmotic changes. The VRAC channel conducts iodide better than chloride and can also conduct organic osmolytes like taurine. Plays a redundant role in the efflux of amino acids, such as aspartate and glutamate, in response to osmotic stress. The VRAC channel also mediates transport of immunoreactive cyclic dinucleotide GMP-AMP (2'-3'-cGAMP), an immune messenger produced in response to DNA virus in the cytosol. Channel activity requires LRRC8A plus at least one other family member (LRRC8B, LRRC8C, LRRC8D or LRRC8E); channel characteristics depend on the precise subunit composition. This Homo sapiens (Human) protein is Volume-regulated anion channel subunit LRRC8C.